The following is a 935-amino-acid chain: Lon protease homolog 2, peroxisomal (935 aa).

The Lon N-terminal domain maps to 12–296; the sequence is LPVHRLERNL…NLRRLVEEMG (285 aa). ATP is bound at residue 452-459; the sequence is GPPGVGKT. One can recognise a Lon proteolytic domain in the interval 692 to 922; sequence QKGYGVVNGL…SDVLASVWEG (231 aa). Catalysis depends on residues Ser-789 and Lys-832. The Microbody targeting signal signature appears at 933–935; that stretch reads ARI.

It belongs to the peptidase S16 family.

The protein localises to the peroxisome matrix. The enzyme catalyses Hydrolysis of proteins in presence of ATP.. Its function is as follows. ATP-dependent serine protease that mediates the selective degradation of misfolded and unassembled polypeptides in the peroxisomal matrix. Necessary for type 2 peroxisome targeting signal (PTS2)-containing protein processing and facilitates peroxisome matrix protein import. This is Lon protease homolog 2, peroxisomal (PLN) from Pichia angusta (Yeast).